A 423-amino-acid chain; its full sequence is tRNA(Ile)-lysidine synthase (423 aa).

18-23 serves as a coordination point for ATP; it reads SGGADS.

Belongs to the tRNA(Ile)-lysidine synthase family.

The protein localises to the cytoplasm. It carries out the reaction cytidine(34) in tRNA(Ile2) + L-lysine + ATP = lysidine(34) in tRNA(Ile2) + AMP + diphosphate + H(+). In terms of biological role, ligates lysine onto the cytidine present at position 34 of the AUA codon-specific tRNA(Ile) that contains the anticodon CAU, in an ATP-dependent manner. Cytidine is converted to lysidine, thus changing the amino acid specificity of the tRNA from methionine to isoleucine. In Aromatoleum aromaticum (strain DSM 19018 / LMG 30748 / EbN1) (Azoarcus sp. (strain EbN1)), this protein is tRNA(Ile)-lysidine synthase.